The following is a 141-amino-acid chain: Nucleoside diphosphate kinase (141 aa).

Residues Lys11, Phe59, Arg87, Thr93, Arg104, and Asn114 each contribute to the ATP site. The Pros-phosphohistidine intermediate role is filled by His117.

The protein belongs to the NDK family. In terms of assembly, homotetramer. Mg(2+) serves as cofactor.

The protein resides in the cytoplasm. It catalyses the reaction a 2'-deoxyribonucleoside 5'-diphosphate + ATP = a 2'-deoxyribonucleoside 5'-triphosphate + ADP. The catalysed reaction is a ribonucleoside 5'-diphosphate + ATP = a ribonucleoside 5'-triphosphate + ADP. In terms of biological role, major role in the synthesis of nucleoside triphosphates other than ATP. The ATP gamma phosphate is transferred to the NDP beta phosphate via a ping-pong mechanism, using a phosphorylated active-site intermediate. The polypeptide is Nucleoside diphosphate kinase (Azoarcus sp. (strain BH72)).